Consider the following 262-residue polypeptide: MAAESGKVDPMKQFSIEPMLGSEGWEIAGYNIAFTNSAAWMALTTVLLAVFVWGGMKGQLVPGRWQMMVESFTSFIDDMLEVNIGKAGRKYVPYVFSLFMFILFGNLLGLLPLGVLGIHPFTFTSHFTITGVLAIISFSIVLIVGFWKHGFHFFSLFVPSGTPLPMIPIIFPIELISFLVRPFSLALRLFVAMMAGHVLLKVLSSFVIDGINAGAGFGLLVGAPSFILMIGISALEILVAGIQAYVFALLTSLYINDAENLH.

6 helical membrane passes run 32 to 52 (IAFT…AVFV), 98 to 118 (LFMF…VLGI), 127 to 147 (FTIT…VGFW), 153 to 173 (FFSL…IFPI), 189 to 209 (LFVA…FVID), and 219 to 239 (LLVG…EILV).

Belongs to the ATPase A chain family. As to quaternary structure, F-type ATPases have 2 components, CF(1) - the catalytic core - and CF(0) - the membrane proton channel. CF(1) has five subunits: alpha(3), beta(3), gamma(1), delta(1), epsilon(1). CF(0) has four main subunits: a, b, b' and c.

It is found in the cell inner membrane. Its function is as follows. Key component of the proton channel; it plays a direct role in the translocation of protons across the membrane. In Erythrobacter litoralis (strain HTCC2594), this protein is ATP synthase subunit a.